The chain runs to 152 residues: Ribonuclease H (152 aa).

The RNase H type-1 domain maps to 1-142 (MKEVTIYTDG…CDELARAAIA (142 aa)). Positions 9, 47, 69, and 134 each coordinate Mg(2+).

Belongs to the RNase H family. Monomer. Mg(2+) is required as a cofactor.

Its subcellular location is the cytoplasm. The catalysed reaction is Endonucleolytic cleavage to 5'-phosphomonoester.. Functionally, endonuclease that specifically degrades the RNA of RNA-DNA hybrids. This Moorella thermoacetica (strain ATCC 39073 / JCM 9320) protein is Ribonuclease H.